The primary structure comprises 776 residues: 5-methyltetrahydropteroyltriglutamate--homocysteine methyltransferase (776 aa).

Residues 16–19 (RELK) and K112 contribute to the 5-methyltetrahydropteroyltri-L-glutamate site. Residues 432 to 434 (IGS) and E485 contribute to the L-homocysteine site. Residues 432–434 (IGS) and E485 contribute to the L-methionine site. Residues 516-517 (RC) and W562 each bind 5-methyltetrahydropteroyltri-L-glutamate. Residue D600 participates in L-homocysteine binding. D600 contacts L-methionine. 5-methyltetrahydropteroyltri-L-glutamate is bound at residue E606. Residues H642, C644, and E666 each coordinate Zn(2+). H695 acts as the Proton donor in catalysis. Residue C727 coordinates Zn(2+). The tract at residues 755 to 776 (HAGAVHAGTPATRAEHAESALA) is disordered. The segment covering 767-776 (RAEHAESALA) has biased composition (basic and acidic residues).

This sequence belongs to the vitamin-B12 independent methionine synthase family. Zn(2+) is required as a cofactor.

The catalysed reaction is 5-methyltetrahydropteroyltri-L-glutamate + L-homocysteine = tetrahydropteroyltri-L-glutamate + L-methionine. It participates in amino-acid biosynthesis; L-methionine biosynthesis via de novo pathway; L-methionine from L-homocysteine (MetE route): step 1/1. Functionally, catalyzes the transfer of a methyl group from 5-methyltetrahydrofolate to homocysteine resulting in methionine formation. The protein is 5-methyltetrahydropteroyltriglutamate--homocysteine methyltransferase of Ralstonia nicotianae (strain ATCC BAA-1114 / GMI1000) (Ralstonia solanacearum).